Here is a 698-residue protein sequence, read N- to C-terminus: Polyribonucleotide nucleotidyltransferase (698 aa).

Mg(2+) is bound by residues D486 and D492. In terms of domain architecture, KH spans 553-612; that stretch reads PRIIVRNIPKDRIGELIGPGGKNVRGISELTGAELYIEDDGKVTISGSNQESAEKAAKMV. The S1 motif domain maps to 622-690; that stretch reads GKIYEGKVKR…KTGKIDLSRK (69 aa).

The protein belongs to the polyribonucleotide nucleotidyltransferase family. Mg(2+) is required as a cofactor.

The protein resides in the cytoplasm. It carries out the reaction RNA(n+1) + phosphate = RNA(n) + a ribonucleoside 5'-diphosphate. Involved in mRNA degradation. Catalyzes the phosphorolysis of single-stranded polyribonucleotides processively in the 3'- to 5'-direction. The sequence is that of Polyribonucleotide nucleotidyltransferase from Leptospira interrogans serogroup Icterohaemorrhagiae serovar copenhageni (strain Fiocruz L1-130).